The primary structure comprises 735 residues: Disintegrin and metalloproteinase domain-containing protein 2 (735 aa).

A signal peptide spans 1 to 16; it reads MWRVLFLLSGLGGLWM. Positions 17-174 are excised as a propeptide; it reads DSNFDSLPVQ…FKLQSIEPQK (158 aa). The Extracellular portion of the chain corresponds to 17-686; it reads DSNFDSLPVQ…ENVYHSKPMR (670 aa). N-linked (GlcNAc...) asparagine glycans are attached at residues N76, N122, and N220. A Peptidase M12B domain is found at 178–375; it reads KYIEMHVVVE…QKSQCLHNQP (198 aa). 4 cysteine pairs are disulfide-bonded: C287–C370, C329–C354, C331–C336, and C445–C465. N-linked (GlcNAc...) asparagine glycans are attached at residues N353, N459, and N566. The Disintegrin domain maps to 384–473; sequence QAVCGNAKLE…SCPENHFIQT (90 aa). The 34-residue stretch at 612-645 folds into the EGF-like domain; sequence LGYDCTTDKCNHRGVCNNKKHCHCSASYLPPDCS. Disulfide bonds link C616–C627, C621–C633, and C635–C644. The chain crosses the membrane as a helical span at residues 687 to 707; that stretch reads WPLFLFIPFFIIFCVLIAIMV. The Cytoplasmic portion of the chain corresponds to 708–735; that stretch reads KVHFQRKKWRTEDYSTDEQPESESEPKG. At S729 the chain carries Phosphoserine.

As to quaternary structure, heterodimer with ADAM1/fertilin subunit alpha. The signal and the metalloprotease domain are cleaved during the epididymal maturation of the spermatozoa. In terms of tissue distribution, expressed specifically in testis.

Its subcellular location is the membrane. Sperm surface membrane protein that may be involved in sperm-egg plasma membrane adhesion and fusion during fertilization. Could have a direct role in sperm-zona binding or migration of sperm from the uterus into the oviduct. Interactions with egg membrane could be mediated via binding between its disintegrin-like domain to one or more integrins receptors on the egg. This is a non catalytic metalloprotease-like protein. This is Disintegrin and metalloproteinase domain-containing protein 2 (ADAM2) from Macaca fascicularis (Crab-eating macaque).